The following is a 253-amino-acid chain: Probable U2 small nuclear ribonucleoprotein A' (253 aa).

LRR repeat units lie at residues 20-41 (NMRE…GVTR), 43-64 (QFDV…PTFS), 65-86 (RLNT…IATK), and 89-110 (NLKT…EPLA). Residues 123-161 (NPITHKDNYRMYMIYKLPTVRVIDFNRVRLTEREAAKKM) form the LRRCT domain. Disordered regions lie at residues 163-205 (KGKS…EDRE) and 232-253 (VPEK…AMES). The segment covering 169–182 (KARDAIQKSVHTED) has biased composition (basic and acidic residues).

The protein belongs to the U2 small nuclear ribonucleoprotein A family. As to quaternary structure, interacts with rnp-3.

The protein resides in the nucleus. Its function is as follows. This protein is associated with sn-RNP U2. It helps the A' protein to bind stem loop IV of U2 snRNA. Required maternally for early embryonic development and zygotically for germline and somatic development. Has a role in the switch from mitosis to meiosis. Might function in alternative splicing. In Caenorhabditis elegans, this protein is Probable U2 small nuclear ribonucleoprotein A' (mog-2).